The following is a 163-amino-acid chain: Phosphopantetheine adenylyltransferase (163 aa).

Substrate is bound at residue Ser8. ATP contacts are provided by residues 8 to 9 (SF) and His16. Positions 40, 72, and 86 each coordinate substrate. ATP is bound by residues 87–89 (GLR), Glu97, and 122–128 (HSFLSSS).

It belongs to the bacterial CoaD family. As to quaternary structure, homohexamer. Requires Mg(2+) as cofactor.

Its subcellular location is the cytoplasm. The enzyme catalyses (R)-4'-phosphopantetheine + ATP + H(+) = 3'-dephospho-CoA + diphosphate. It functions in the pathway cofactor biosynthesis; coenzyme A biosynthesis; CoA from (R)-pantothenate: step 4/5. In terms of biological role, reversibly transfers an adenylyl group from ATP to 4'-phosphopantetheine, yielding dephospho-CoA (dPCoA) and pyrophosphate. The sequence is that of Phosphopantetheine adenylyltransferase from Parasynechococcus marenigrum (strain WH8102).